The sequence spans 397 residues: Bifunctional arginine demethylase and lysyl-hydroxylase psr-1 (397 aa).

Residues 146–310 (RKTKKLSEDY…LVWPKTVRGR (165 aa)) enclose the JmjC domain. T189 serves as a coordination point for substrate. Residues H192 and D194 each contribute to the Fe cation site. N202 contacts 2-oxoglutarate. K209 is a substrate binding site. H278 contacts Fe cation. Residue T290 coordinates 2-oxoglutarate. Over residues 334-344 (SCTDTPPQSLN) the composition is skewed to polar residues. Positions 334–383 (SCTDTPPQSLNDSSSDSSSSSSSSDDSSDSETEEDSGRCGLGNRKRRNDV) are disordered. Low complexity predominate over residues 345-358 (DSSSDSSSSSSSSD).

Belongs to the JMJD6 family. As to quaternary structure, interacts with ced-5 and ced-12. Requires Fe(2+) as cofactor.

It is found in the nucleus. Functionally, dioxygenase that can both act as a histone arginine demethylase and a lysyl-hydroxylase. This Caenorhabditis briggsae protein is Bifunctional arginine demethylase and lysyl-hydroxylase psr-1 (psr-1).